The sequence spans 204 residues: Cytochrome c biogenesis ATP-binding export protein CcmA (204 aa).

Residues 2-204 (IEVRDLGVSR…LDAEDLGGFL (203 aa)) form the ABC transporter domain. 34 to 41 (GPNGIGKT) lines the ATP pocket.

This sequence belongs to the ABC transporter superfamily. CcmA exporter (TC 3.A.1.107) family. The complex is composed of two ATP-binding proteins (CcmA) and two transmembrane proteins (CcmB).

The protein resides in the cell inner membrane. The catalysed reaction is heme b(in) + ATP + H2O = heme b(out) + ADP + phosphate + H(+). Functionally, part of the ABC transporter complex CcmAB involved in the biogenesis of c-type cytochromes; once thought to export heme, this seems not to be the case, but its exact role is uncertain. Responsible for energy coupling to the transport system. The sequence is that of Cytochrome c biogenesis ATP-binding export protein CcmA from Ruegeria sp. (strain TM1040) (Silicibacter sp.).